A 593-amino-acid chain; its full sequence is Multidrug resistance-like ATP-binding protein MdlB (593 aa).

At 1-25 (MRSFSQLWPTLKRLLAYGSPWRKPL) the chain is on the cytoplasmic side. Positions 25-310 (LGIAVLMMWV…LTTQQAMLQQ (286 aa)) constitute an ABC transmembrane type-1 domain. A helical membrane pass occupies residues 26–46 (GIAVLMMWVAAAAEVSGPLLI). The Periplasmic portion of the chain corresponds to 47–62 (SYFIDNMVAKNNLPLK). The chain crosses the membrane as a helical span at residues 63–83 (VVAGLAAAYVGLQLFAAGLHY). At 84 to 140 (AQSLLFNRAAVGVVQQLRTDVMDAALRQPLSEFDTQPVGQVISRVTNDTEVIRDLYV) the chain is on the cytoplasmic side. The helical transmembrane segment at 141 to 161 (TVVATVLRSAALVGAMLVAMF) threads the bilayer. The Periplasmic portion of the chain corresponds to 162–164 (SLD). Residues 165 to 185 (WRMALVAIMIFPVVLVVMVIY) traverse the membrane as a helical segment. The Cytoplasmic portion of the chain corresponds to 186 to 254 (QRYSTPIVRR…LRLDGFLLRP (69 aa)). Residues 255–275 (LLSLFSSLILCGLLMLFGFSA) form a helical membrane-spanning segment. Over 276-278 (SGT) the chain is Periplasmic. Residues 279–299 (IEVGVLYAFISYLGRLNEPLI) form a helical membrane-spanning segment. Residues 300 to 593 (ELTTQQAMLQ…SVREEESLSA (294 aa)) are Cytoplasmic-facing. The ABC transporter domain maps to 341–574 (IEVDNVSFAY…QGRYWQMYQL (234 aa)). ATP is bound at residue 374–381 (GHTGSGKS).

It belongs to the ABC transporter superfamily. Drug exporter-2 (TC 3.A.1.117) family.

It is found in the cell inner membrane. It carries out the reaction ATP + H2O + xenobioticSide 1 = ADP + phosphate + xenobioticSide 2.. This Escherichia coli O6:H1 (strain CFT073 / ATCC 700928 / UPEC) protein is Multidrug resistance-like ATP-binding protein MdlB (mdlB).